Consider the following 356-residue polypeptide: Protein ATP1B4 (356 aa).

At 1 to 109 (MRRQLRSRRA…SLARTGQSRS (109 aa)) the chain is on the nuclear side. A disordered region spans residues 26-78 (EANHNYLADEEEEAEEEAQVMMVPGLEEEEEEEEGKEEEEEREEEEGQGQSTG). Composition is skewed to acidic residues over residues 33 to 43 (ADEEEEAEEEA) and 51 to 72 (LEEE…EEEG). The chain crosses the membrane as a helical; Signal-anchor for type II membrane protein span at residues 110 to 130 (LILVIYFFFYASLAAVITLFI). The Perinuclear space segment spans residues 131–356 (YMLFLAISPY…RIIFTLNIET (226 aa)).

It belongs to the X(+)/potassium ATPases subunit beta family. As to quaternary structure, associates with a SMAD7-transcriptional complex. Interacts with TOR1AIP1. Does not associate with known Na,K-ATPase alpha-subunits. Interacts with SNW1. As to expression, expressed in skeletal muscle (at protein level). Expressed during postnatal development in skeletal muscle and heart.

The protein localises to the nucleus inner membrane. May act as a transcriptional coregulator during muscle development through its interaction with SNW1. Has lost its ancestral function as a Na,K-ATPase beta-subunit. The polypeptide is Protein ATP1B4 (Atp1b4) (Mus musculus (Mouse)).